Consider the following 174-residue polypeptide: Protein GrpE (174 aa).

Belongs to the GrpE family. In terms of assembly, homodimer.

The protein localises to the cytoplasm. In terms of biological role, participates actively in the response to hyperosmotic and heat shock by preventing the aggregation of stress-denatured proteins, in association with DnaK and GrpE. It is the nucleotide exchange factor for DnaK and may function as a thermosensor. Unfolded proteins bind initially to DnaJ; upon interaction with the DnaJ-bound protein, DnaK hydrolyzes its bound ATP, resulting in the formation of a stable complex. GrpE releases ADP from DnaK; ATP binding to DnaK triggers the release of the substrate protein, thus completing the reaction cycle. Several rounds of ATP-dependent interactions between DnaJ, DnaK and GrpE are required for fully efficient folding. This is Protein GrpE from Methanothermobacter thermautotrophicus (strain ATCC 29096 / DSM 1053 / JCM 10044 / NBRC 100330 / Delta H) (Methanobacterium thermoautotrophicum).